Reading from the N-terminus, the 370-residue chain is Probable trehalose-phosphate phosphatase 6 (370 aa).

The protein belongs to the trehalose phosphatase family. Requires a divalent metal cation as cofactor.

The enzyme catalyses alpha,alpha-trehalose 6-phosphate + H2O = alpha,alpha-trehalose + phosphate. It participates in glycan biosynthesis; trehalose biosynthesis. Removes the phosphate from trehalose 6-phosphate to produce free trehalose. Trehalose accumulation in plant may improve abiotic stress tolerance. The polypeptide is Probable trehalose-phosphate phosphatase 6 (TPP6) (Oryza sativa subsp. japonica (Rice)).